A 174-amino-acid polypeptide reads, in one-letter code: Crossover junction endodeoxyribonuclease RuvC (174 aa).

Catalysis depends on residues D8, E67, and D139. Mg(2+)-binding residues include D8, E67, and D139.

This sequence belongs to the RuvC family. Homodimer which binds Holliday junction (HJ) DNA. The HJ becomes 2-fold symmetrical on binding to RuvC with unstacked arms; it has a different conformation from HJ DNA in complex with RuvA. In the full resolvosome a probable DNA-RuvA(4)-RuvB(12)-RuvC(2) complex forms which resolves the HJ. The cofactor is Mg(2+).

It is found in the cytoplasm. The catalysed reaction is Endonucleolytic cleavage at a junction such as a reciprocal single-stranded crossover between two homologous DNA duplexes (Holliday junction).. Its function is as follows. The RuvA-RuvB-RuvC complex processes Holliday junction (HJ) DNA during genetic recombination and DNA repair. Endonuclease that resolves HJ intermediates. Cleaves cruciform DNA by making single-stranded nicks across the HJ at symmetrical positions within the homologous arms, yielding a 5'-phosphate and a 3'-hydroxyl group; requires a central core of homology in the junction. The consensus cleavage sequence is 5'-(A/T)TT(C/G)-3'. Cleavage occurs on the 3'-side of the TT dinucleotide at the point of strand exchange. HJ branch migration catalyzed by RuvA-RuvB allows RuvC to scan DNA until it finds its consensus sequence, where it cleaves and resolves the cruciform DNA. The sequence is that of Crossover junction endodeoxyribonuclease RuvC from Pseudomonas putida (strain W619).